Consider the following 417-residue polypeptide: UDP-N-acetylglucosamine 1-carboxyvinyltransferase (417 aa).

A phosphoenolpyruvate-binding site is contributed by 22–23 (KN). Arginine 93 is a UDP-N-acetyl-alpha-D-glucosamine binding site. Cysteine 117 acts as the Proton donor in catalysis. 2-(S-cysteinyl)pyruvic acid O-phosphothioketal is present on cysteine 117. UDP-N-acetyl-alpha-D-glucosamine is bound by residues 122-126 (RPVDQ), aspartate 304, and isoleucine 326.

The protein belongs to the EPSP synthase family. MurA subfamily.

The protein localises to the cytoplasm. The catalysed reaction is phosphoenolpyruvate + UDP-N-acetyl-alpha-D-glucosamine = UDP-N-acetyl-3-O-(1-carboxyvinyl)-alpha-D-glucosamine + phosphate. The protein operates within cell wall biogenesis; peptidoglycan biosynthesis. Cell wall formation. Adds enolpyruvyl to UDP-N-acetylglucosamine. This chain is UDP-N-acetylglucosamine 1-carboxyvinyltransferase, found in Laribacter hongkongensis (strain HLHK9).